The sequence spans 25 residues: ATP synthase subunit alpha, mitochondrial (25 aa).

The protein belongs to the ATPase alpha/beta chains family. F-type ATPases have 2 components, CF(1) - the catalytic core - and CF(0) - the membrane proton channel. CF(1) has five subunits: alpha(3), beta(3), gamma(1), delta(1), epsilon(1). CF(0) has three main subunits: a, b and c.

The protein resides in the mitochondrion. It localises to the mitochondrion inner membrane. In terms of biological role, mitochondrial membrane ATP synthase (F(1)F(0) ATP synthase or Complex V) produces ATP from ADP in the presence of a proton gradient across the membrane which is generated by electron transport complexes of the respiratory chain. F-type ATPases consist of two structural domains, F(1) - containing the extramembraneous catalytic core, and F(0) - containing the membrane proton channel, linked together by a central stalk and a peripheral stalk. During catalysis, ATP synthesis in the catalytic domain of F(1) is coupled via a rotary mechanism of the central stalk subunits to proton translocation. Subunits alpha and beta form the catalytic core in F(1). Rotation of the central stalk against the surrounding alpha(3)beta(3) subunits leads to hydrolysis of ATP in three separate catalytic sites on the beta subunits. Subunit alpha does not bear the catalytic high-affinity ATP-binding sites. In Spinacia oleracea (Spinach), this protein is ATP synthase subunit alpha, mitochondrial (ATPA).